Reading from the N-terminus, the 1763-residue chain is Genome polyprotein (1763 aa).

The SF3 helicase domain occupies 458–614; sequence DGVITSCNKR…ESHKRARPGT (157 aa). 484–491 is an ATP binding site; the sequence is GPPGCGKT. Tyr984 is modified (O-(5'-phospho-RNA)-tyrosine). The Peptidase C24 domain maps to 1073–1229; it reads GPGTKFHKNA…KLVVPYVHID (157 aa). Catalysis depends on for 3CLpro activity residues His1110, Glu1131, and Cys1193. Positions 1478–1603 constitute a RdRp catalytic domain; that stretch reads AKVYAVDYSK…MFPTMFASIS (126 aa).

Protein p32: Homodimer. Interacts with NTPase, protein p30 and protease-polymerase p76. As to quaternary structure, interacts with capsid protein VP1 and protease-polymerase p76. In terms of assembly, homooligomer. Interacts with Vpg, protein p32 and may interact with capsid protein VP1. Post-translationally, specific enzymatic cleavages in vivo yield mature proteins. Pro-Pol is first autocatalytically cleaved, then processes the whole polyprotein. VPg is uridylylated by the polymerase and is covalently attached to the 5'-end of the polyadenylated genomic and subgenomic RNAs. This uridylylated form acts as a nucleotide-peptide primer for the polymerase.

It carries out the reaction a ribonucleoside 5'-triphosphate + H2O = a ribonucleoside 5'-diphosphate + phosphate + H(+). The catalysed reaction is RNA(n) + a ribonucleoside 5'-triphosphate = RNA(n+1) + diphosphate. The enzyme catalyses Endopeptidase with a preference for cleavage when the P1 position is occupied by Glu-|-Xaa and the P1' position is occupied by Gly-|-Yaa.. NTPase presumably plays a role in replication. Despite having similarities with helicases, does not seem to display any helicase activity. Functionally, viral genome-linked protein is covalently linked to the 5'-end of the positive-strand, negative-strand genomic RNAs and subgenomic RNA. Acts as a genome-linked replication primer. May recruit ribosome to viral RNA thereby promoting viral proteins translation. Its function is as follows. The protease activity processes the polyprotein: Pro-Pol is first released by autocleavage, then all other proteins are cleaved. Cleaves host translation initiation factor eIF4G1, eIF4G2 and PABP1 thereby inducing a shutdown of host protein synthesis. This shutdown may not prevent viral mRNA from being translated since viral Vpg replaces the cap. May cleave host polyadenylate-binding protein thereby inhibiting cellular translation. Seems to act as a RNase and degrades host Pol II-driven mRNAs with the help of host XRN1. Inhibits the integrated stress response (ISR) in the infected cell by cleaving host G3BP1 and G3BP2. Stress granule formation is thus inhibited, which allows protein synthesis and viral replication. The RNA-directed RNA polymerase activity replicates genomic and antigenomic viral RNA by recognizing specific signals. Also transcribes a subgenomic mRNA by initiating RNA synthesis internally on antigenomic RNA. This sgRNA codes for structural proteins. Catalyzes the covalent attachment VPg with viral RNAs. In terms of biological role, selectively decays the mRNA of host interferon receptor IFNAR1. This Feline calicivirus (FCV) protein is Genome polyprotein.